The sequence spans 74 residues: uncharacterized protein (74 aa).

A signal peptide spans 1-19; that stretch reads MIGLIVVPILFAIKGIVVG. The segment at 26–74 is disordered; the sequence is KFGKHSNTKDQKEDKDEDKRQSISQRKQHTEWPIEENRIQRRAPNQSAL. Composition is skewed to basic and acidic residues over residues 32 to 46 and 53 to 64; these read NTKDQKEDKDEDKRQ and QHTEWPIEENRI.

This is an uncharacterized protein from Saccharomyces cerevisiae (strain ATCC 204508 / S288c) (Baker's yeast).